Consider the following 226-residue polypeptide: Uridylate kinase (226 aa).

Residue 9-10 participates in ATP binding; that stretch reads GS. Gly46 is a UMP binding site. 2 residues coordinate ATP: Gly47 and Arg51. UMP contacts are provided by residues Asp68 and 116–122; that span reads THPGHTT. ATP contacts are provided by Thr142, Asn143, Tyr148, and Asp151.

The protein belongs to the UMP kinase family. In terms of assembly, homohexamer.

The protein resides in the cytoplasm. The catalysed reaction is UMP + ATP = UDP + ADP. The protein operates within pyrimidine metabolism; CTP biosynthesis via de novo pathway; UDP from UMP (UMPK route): step 1/1. Inhibited by UTP. In terms of biological role, catalyzes the reversible phosphorylation of UMP to UDP. This is Uridylate kinase from Methanocaldococcus jannaschii (strain ATCC 43067 / DSM 2661 / JAL-1 / JCM 10045 / NBRC 100440) (Methanococcus jannaschii).